We begin with the raw amino-acid sequence, 465 residues long: Phytase A (465 aa).

The N-terminal stretch at 1 to 26 (MVTLTFLLSAAYLLSGRVSAAPSSAG) is a signal peptide. A disulfide bond links Cys-30 and Cys-39. Residues Gln-49, Tyr-50, Arg-80, His-81, Arg-84, and Thr-87 each contribute to the 1D-myo-inositol hexakisphosphate site. Cystine bridges form between Cys-70/Cys-412, Cys-213/Cys-463, Cys-262/Cys-280, and Cys-434/Cys-442. Catalysis depends on His-81, which acts as the Nucleophile. N-linked (GlcNAc...) asparagine glycosylation occurs at Asn-104. 1D-myo-inositol hexakisphosphate is bound at residue Arg-164. Asn-205 is a glycosylation site (N-linked (GlcNAc...) asparagine). Residue Asp-209 coordinates 1D-myo-inositol hexakisphosphate. Asn-228 carries N-linked (GlcNAc...) asparagine glycosylation. Lys-299 contributes to the 1D-myo-inositol hexakisphosphate binding site. N-linked (GlcNAc...) asparagine glycans are attached at residues Asn-337 and Asn-350. Residues His-359 and Asp-360 each contribute to the 1D-myo-inositol hexakisphosphate site. N-linked (GlcNAc...) asparagine glycosylation is present at Asn-374.

It belongs to the histidine acid phosphatase family. In terms of assembly, monomer.

The protein resides in the secreted. It carries out the reaction 1D-myo-inositol hexakisphosphate + H2O = 1D-myo-inositol 1,2,4,5,6-pentakisphosphate + phosphate. It catalyses the reaction 1D-myo-inositol 1,2,4,5,6-pentakisphosphate + H2O = 1D-myo-inositol 1,2,5,6-tetrakisphosphate + phosphate. The enzyme catalyses 1D-myo-inositol 1,2,5,6-tetrakisphosphate + H2O = 1D-myo-inositol 1,2,6-trisphosphate + phosphate. The catalysed reaction is 1D-myo-inositol 1,2,6-trisphosphate + H2O = 1D-myo-inositol 1,2-bisphosphate + phosphate. It carries out the reaction 1D-myo-inositol 1,2-bisphosphate + H2O = 1D-myo-inositol 2-phosphate + phosphate. Functionally, catalyzes the phosphate monoester hydrolysis of phytic acid (myo-inositol hexakisphosphate), which results in the stepwise formation of myo-inositol pentakis-, tetrakis-, tris-, bis-, and monophosphates, as well as the liberation of inorganic phosphate. Myo-inositol 2-monophosphate is the end product. Has a broad substrate specificity and is also able to dephosphorylate other classic acid phosphatase substrates such as p-nitrophenyl phosphate, phenyl phosphate, fructose 1,6-bisphosphate, fructose 6-phosphate, glucose 6-phosphate, ribose 5-phosphate, alpha-glycerophosphate, beta-glycerophosphate, 3-phosphoglycerate, phosphoenolpyruvate, as well as ADP and ATP. In Aspergillus fumigatus (strain ATCC MYA-4609 / CBS 101355 / FGSC A1100 / Af293) (Neosartorya fumigata), this protein is Phytase A (phyA).